The chain runs to 460 residues: Probable Xaa-Pro aminopeptidase PEPP (460 aa).

4 residues coordinate Mn(2+): Asp256, Asp267, Glu390, and Glu430.

It belongs to the peptidase M24B family. It depends on Mn(2+) as a cofactor.

The enzyme catalyses Release of any N-terminal amino acid, including proline, that is linked to proline, even from a dipeptide or tripeptide.. Functionally, catalyzes the removal of a penultimate prolyl residue from the N-termini of peptides. The protein is Probable Xaa-Pro aminopeptidase PEPP (PEPP) of Podospora anserina (strain S / ATCC MYA-4624 / DSM 980 / FGSC 10383) (Pleurage anserina).